Reading from the N-terminus, the 500-residue chain is Glucose-1-phosphate adenylyltransferase large subunit, chloroplastic/amyloplastic (500 aa).

A chloroplast-targeting transit peptide spans 1 to 33 (RASPPSESRAPLRAPQRSATRQHQARQGPRRMC). Positions 1 to 47 (RASPPSESRAPLRAPQRSATRQHQARQGPRRMCNGGRGPPYWTAGVT) are disordered.

It belongs to the bacterial/plant glucose-1-phosphate adenylyltransferase family. Heterotetramer.

It localises to the plastid. The protein localises to the chloroplast. The protein resides in the amyloplast. It catalyses the reaction alpha-D-glucose 1-phosphate + ATP + H(+) = ADP-alpha-D-glucose + diphosphate. The protein operates within glycan biosynthesis; starch biosynthesis. Its activity is regulated as follows. Insensitive to 3'phosphoglycerate and orthophosphate. Its function is as follows. This protein plays a role in synthesis of starch. It catalyzes the synthesis of the activated glycosyl donor, ADP-glucose from Glc-1-P and ATP. This is Glucose-1-phosphate adenylyltransferase large subunit, chloroplastic/amyloplastic (AGA.7) from Triticum aestivum (Wheat).